The primary structure comprises 212 residues: Glutathione S-transferase P 1 (212 aa).

The GST N-terminal domain maps to 2–83 (PGYVLTYFPV…YLGNKHGLTG (82 aa)). Glutathione contacts are provided by residues tyrosine 8, arginine 14, tryptophan 39, lysine 47, 54–55 (QL), and 67–68 (QS). The GST C-terminal domain occupies 85–206 (NDEERGHIDM…KSDARNKRPI (122 aa)).

It belongs to the GST superfamily. Pi family. As to quaternary structure, homodimer. As to expression, expressed only in embryos. Not expressed in liver, lung, heart, kidney and ovary.

The protein localises to the cytoplasm. It localises to the mitochondrion. It is found in the nucleus. The catalysed reaction is RX + glutathione = an S-substituted glutathione + a halide anion + H(+). Functionally, conjugation of reduced glutathione to a wide number of exogenous and endogenous hydrophobic electrophiles. Highly active towards 1-chloro-2,4-dinitrobenzene and organic isothiocyanates, but shows no detectable activity towards 1,2-dichloro-4-nitrobenzene, p-nitrobenzylchloride, trans-4-phenyl-3-buten-2-one (tPBO) and ethacrynic acid. May be associated with cellular proliferation. This chain is Glutathione S-transferase P 1 (gstp1), found in Xenopus laevis (African clawed frog).